The primary structure comprises 364 residues: Chorismate synthase (364 aa).

The interval 41 to 60 (MQHDLDRRRPGTSRYTTARR) is disordered. Arg48 and Arg54 together coordinate NADP(+). Residues 125-127 (RSS), 238-239 (NA), Gly278, 293-297 (KPTSS), and Arg319 contribute to the FMN site.

The protein belongs to the chorismate synthase family. Homotetramer. The cofactor is FMNH2.

It catalyses the reaction 5-O-(1-carboxyvinyl)-3-phosphoshikimate = chorismate + phosphate. It functions in the pathway metabolic intermediate biosynthesis; chorismate biosynthesis; chorismate from D-erythrose 4-phosphate and phosphoenolpyruvate: step 7/7. Its function is as follows. Catalyzes the anti-1,4-elimination of the C-3 phosphate and the C-6 proR hydrogen from 5-enolpyruvylshikimate-3-phosphate (EPSP) to yield chorismate, which is the branch point compound that serves as the starting substrate for the three terminal pathways of aromatic amino acid biosynthesis. This reaction introduces a second double bond into the aromatic ring system. This Shewanella putrefaciens (strain CN-32 / ATCC BAA-453) protein is Chorismate synthase.